Consider the following 109-residue polypeptide: MASIQFIQGVDEDIIPTVRLTRSRDGQTGTAVFRFVQPKLLQQQGEITGMYMIDEEGEIVTREVQAKFVNGQPQIIEALYVMKNAQAWERFMRFMNRYAEAKGLSFQRS.

It belongs to the Psb28 family. Part of the photosystem II complex.

The protein resides in the plastid. The protein localises to the chloroplast thylakoid membrane. This is Photosystem II reaction center Psb28 protein from Cyanidioschyzon merolae (strain NIES-3377 / 10D) (Unicellular red alga).